A 2923-amino-acid polypeptide reads, in one-letter code: Cadherin EGF LAG seven-pass G-type receptor 2 (2923 aa).

An N-terminal signal peptide occupies residues 1–31; that stretch reads MRSPATGVPLPTPPPPLLLLLLLLLPPPLLG. Over 32–2380 the chain is Extracellular; the sequence is DQVGPCRSLG…GEILPLKTLT (2349 aa). The interval 154–198 is disordered; the sequence is PGLRAGERSPEESLGGRRKRNVNTAPQFQPPSYQATVPENQPAGT. Residues 158–168 are compositionally biased toward basic and acidic residues; that stretch reads AGERSPEESLG. Residues 175 to 196 are compositionally biased toward polar residues; that stretch reads VNTAPQFQPPSYQATVPENQPA. Cadherin domains follow at residues 182–289, 290–399, 400–505, 506–610, 611–712, 713–815, 816–921, 922–1023, and 1028–1146; these read QPPS…DPVF, EQQE…APQF, SEKR…APIF, VSTP…NPTF, TQPE…RPVF, QSSH…APQF, LRDS…PPVF, EQDE…PPVL, and ILFN…SPLL. N-linked (GlcNAc...) asparagine glycans are attached at residues Asn-486, Asn-557, and Asn-701. Asn-1036, Asn-1076, Asn-1182, and Asn-1212 each carry an N-linked (GlcNAc...) asparagine glycan. An EGF-like 1; calcium-binding domain is found at 1228-1286; it reads DDNICLREPCENYMRCVSVLRFDSSAPFIASSSVLFRPIHPVGGLRCRCPPGFTGDYCE. Disulfide bonds link Cys-1232–Cys-1243, Cys-1237–Cys-1274, Cys-1276–Cys-1285, Cys-1292–Cys-1303, Cys-1297–Cys-1312, Cys-1314–Cys-1323, Cys-1332–Cys-1343, Cys-1337–Cys-1353, and Cys-1355–Cys-1365. The 37-residue stretch at 1288–1324 folds into the EGF-like 2; calcium-binding domain; it reads EVDLCYSRPCGPHGRCRSREGGYTCLCRDGYTGEHCE. Residues 1328–1366 enclose the EGF-like 3; calcium-binding domain; that stretch reads RSGRCTPGVCKNGGTCVNLLVGGFKCDCPSGDFEKPYCQ. The region spanning 1367–1571 is the Laminin G-like 1 domain; that stretch reads VTTRSFPAHS…IANNGTVPGC (205 aa). Asn-1501 and Asn-1565 each carry an N-linked (GlcNAc...) asparagine glycan. 4 disulfides stabilise this stretch: Cys-1545–Cys-1571, Cys-1578–Cys-1589, Cys-1583–Cys-1598, and Cys-1600–Cys-1609. The 37-residue stretch at 1574–1610 folds into the EGF-like 4; calcium-binding domain; that stretch reads KKNVCDSNTCHNGGTCVNQWDAFSCECPLGFGGKSCA. A (3R)-3-hydroxyasparagine modification is found at Asn-1591. Residues 1614-1791 enclose the Laminin G-like 2 domain; the sequence is ANPQHFLGSS…GESINVEQGC (178 aa). Residue Asn-1741 is glycosylated (N-linked (GlcNAc...) asparagine). Cystine bridges form between Cys-1761/Cys-1791, Cys-1797/Cys-1808, Cys-1802/Cys-1817, Cys-1819/Cys-1828, Cys-1832/Cys-1843, Cys-1837/Cys-1855, Cys-1857/Cys-1866, Cys-1887/Cys-1899, Cys-1889/Cys-1906, Cys-1908/Cys-1921, Cys-1924/Cys-1936, Cys-1926/Cys-1943, Cys-1945/Cys-1954, and Cys-1957/Cys-1969. The 36-residue stretch at 1793-1828 folds into the EGF-like 5; calcium-binding domain; the sequence is LPDPCDSNPCPANSYCSNDWDSYSCSCDPGYYGDNC. (3R)-3-hydroxyasparagine is present on Asn-1810. Residue Asn-1827 is glycosylated (N-linked (GlcNAc...) asparagine). Residues 1829–1867 form the EGF-like 6; calcium-binding domain; the sequence is TNVCDLNPCEHQSVCTRKPSAPHGYTCECPPNYLGPYCE. One can recognise an EGF-like 7; calcium-binding domain in the interval 1883–1922; that stretch reads TCGPCNCDVSKGFDPDCNKTSGECHCKENHYRPPGSPTCL. N-linked (GlcNAc...) asparagine glycosylation is present at Asn-1900. Residues 1924–1971 form the Laminin EGF-like domain; it reads CDCYPTGSLSRVCDPEDGQCPCKPGVIGRQCDRCDNPFAEVTTNGCEV. N-linked (GlcNAc...) asparagine glycans are attached at residues Asn-2024, Asn-2043, and Asn-2061. A GAIN-B domain is found at 2199–2369; the sequence is ETTVILPESV…AVLMDVSRRE (171 aa). A disordered region spans residues 2213–2238; the sequence is PPVVRPAGPGEAQEPEELARRQRRHP. Cystine bridges form between Cys-2319-Cys-2351 and Cys-2339-Cys-2353. The tract at residues 2319–2369 is GPS; sequence CVFWNHSILVSGTGGWSARGCEVVFRNESHVSCQCNHMTSFAVLMDVSRRE. 2 N-linked (GlcNAc...) asparagine glycosylation sites follow: Asn-2323 and Asn-2345. A helical membrane pass occupies residues 2381–2401; the sequence is YVALGVTLAALLLTFFFLTLL. Residues 2402 to 2416 are Cytoplasmic-facing; it reads RILRSNQHGIRRNLT. Residues 2417–2437 form a helical membrane-spanning segment; that stretch reads AALGLAQLVFLLGINQADLPF. Ala-2438 is a topological domain (extracellular). Residues 2439–2459 form a helical membrane-spanning segment; the sequence is CTVIAILLHFLYLCTFSWALL. Over 2460–2480 the chain is Cytoplasmic; it reads EALHLYRALTEVRDVNTGPMR. A helical membrane pass occupies residues 2481–2501; sequence FYYMLGWGVPAFITGLAVGLD. Over 2502–2519 the chain is Extracellular; that stretch reads PEGYGNPDFCWLSIYDTL. A helical transmembrane segment spans residues 2520-2540; sequence IWSFAGPVAFAVSMSVFLYIL. Topologically, residues 2541-2560 are cytoplasmic; the sequence is AARASCAAQRQGFEKKGPVS. Residues 2561–2581 traverse the membrane as a helical segment; that stretch reads GLQPSFAVLLLLSATWLLALL. Over 2582–2591 the chain is Extracellular; sequence SVNSDTLLFH. A helical transmembrane segment spans residues 2592–2612; that stretch reads YLFATCNCIQGPFIFLSYVVL. At 2613–2923 the chain is on the cytoplasmic side; the sequence is SKEVRKALKL…SEFLFFNFLH (311 aa). Disordered regions lie at residues 2688–2838 and 2854–2888; these read SALN…HKGI and LRLP…RQSL. Acidic residues-rich tracts occupy residues 2718–2730 and 2742–2753; these read TDSD…EDDQ and SEEEEEEEEEEA. Positions 2807 to 2819 are enriched in basic and acidic residues; that stretch reads PEERLRENGDALS. The segment covering 2863-2873 has biased composition (low complexity); that stretch reads GSSRGSSASEG.

This sequence belongs to the G-protein coupled receptor 2 family. LN-TM7 subfamily. Heterodimer of 2 chains generated by proteolytic processing; the large extracellular N-terminal fragment and the membrane-bound C-terminal fragment predominantly remain associated and non-covalently linked. In terms of processing, the iron and 2-oxoglutarate dependent 3-hydroxylation of aspartate and asparagine is (R) stereospecific within EGF domains. Post-translationally, autoproteolytically processed at the GPS region of the GAIN-B domain; this cleavage modulates receptor activity. In terms of tissue distribution, highest expression in brain and testis.

Its subcellular location is the cell membrane. Receptor that may have an important role in cell/cell signaling during nervous system formation. The polypeptide is Cadherin EGF LAG seven-pass G-type receptor 2 (Homo sapiens (Human)).